A 212-amino-acid polypeptide reads, in one-letter code: Phosphatidylserine decarboxylase proenzyme (212 aa).

Ser182 serves as the catalytic Schiff-base intermediate with substrate; via pyruvic acid. A Pyruvic acid (Ser); by autocatalysis modification is found at Ser182.

This sequence belongs to the phosphatidylserine decarboxylase family. PSD-A subfamily. Heterodimer of a large membrane-associated beta subunit and a small pyruvoyl-containing alpha subunit. The cofactor is pyruvate. Post-translationally, is synthesized initially as an inactive proenzyme. Formation of the active enzyme involves a self-maturation process in which the active site pyruvoyl group is generated from an internal serine residue via an autocatalytic post-translational modification. Two non-identical subunits are generated from the proenzyme in this reaction, and the pyruvate is formed at the N-terminus of the alpha chain, which is derived from the carboxyl end of the proenzyme. The post-translation cleavage follows an unusual pathway, termed non-hydrolytic serinolysis, in which the side chain hydroxyl group of the serine supplies its oxygen atom to form the C-terminus of the beta chain, while the remainder of the serine residue undergoes an oxidative deamination to produce ammonia and the pyruvoyl prosthetic group on the alpha chain.

It localises to the cell membrane. It carries out the reaction a 1,2-diacyl-sn-glycero-3-phospho-L-serine + H(+) = a 1,2-diacyl-sn-glycero-3-phosphoethanolamine + CO2. It functions in the pathway phospholipid metabolism; phosphatidylethanolamine biosynthesis; phosphatidylethanolamine from CDP-diacylglycerol: step 2/2. Catalyzes the formation of phosphatidylethanolamine (PtdEtn) from phosphatidylserine (PtdSer). The chain is Phosphatidylserine decarboxylase proenzyme from Chlorobium luteolum (strain DSM 273 / BCRC 81028 / 2530) (Pelodictyon luteolum).